Consider the following 394-residue polypeptide: 1-deoxy-D-xylulose 5-phosphate reductoisomerase (394 aa).

NADPH is bound by residues threonine 11, glycine 12, serine 13, isoleucine 14, glycine 37, asparagine 39, and asparagine 126. Lysine 127 provides a ligand contact to 1-deoxy-D-xylulose 5-phosphate. Glutamate 128 lines the NADPH pocket. Position 152 (aspartate 152) interacts with Mn(2+). 4 residues coordinate 1-deoxy-D-xylulose 5-phosphate: serine 153, glutamate 154, serine 178, and histidine 201. Residue glutamate 154 coordinates Mn(2+). NADPH is bound at residue glycine 207. 1-deoxy-D-xylulose 5-phosphate is bound by residues serine 214, asparagine 219, lysine 220, and glutamate 223. Residue glutamate 223 participates in Mn(2+) binding.

Belongs to the DXR family. Requires Mg(2+) as cofactor. It depends on Mn(2+) as a cofactor.

It carries out the reaction 2-C-methyl-D-erythritol 4-phosphate + NADP(+) = 1-deoxy-D-xylulose 5-phosphate + NADPH + H(+). It participates in isoprenoid biosynthesis; isopentenyl diphosphate biosynthesis via DXP pathway; isopentenyl diphosphate from 1-deoxy-D-xylulose 5-phosphate: step 1/6. Catalyzes the NADPH-dependent rearrangement and reduction of 1-deoxy-D-xylulose-5-phosphate (DXP) to 2-C-methyl-D-erythritol 4-phosphate (MEP). This chain is 1-deoxy-D-xylulose 5-phosphate reductoisomerase, found in Synechocystis sp. (strain ATCC 27184 / PCC 6803 / Kazusa).